Here is a 425-residue protein sequence, read N- to C-terminus: Histidine--tRNA ligase (425 aa).

Belongs to the class-II aminoacyl-tRNA synthetase family. Homodimer.

The protein resides in the cytoplasm. The enzyme catalyses tRNA(His) + L-histidine + ATP = L-histidyl-tRNA(His) + AMP + diphosphate + H(+). This Tolumonas auensis (strain DSM 9187 / NBRC 110442 / TA 4) protein is Histidine--tRNA ligase.